Here is a 168-residue protein sequence, read N- to C-terminus: Probable chorismate pyruvate-lyase (168 aa).

Arg-75, Ile-114, and Glu-155 together coordinate substrate.

The protein belongs to the UbiC family.

It is found in the cytoplasm. It catalyses the reaction chorismate = 4-hydroxybenzoate + pyruvate. Its pathway is cofactor biosynthesis; ubiquinone biosynthesis. In terms of biological role, removes the pyruvyl group from chorismate, with concomitant aromatization of the ring, to provide 4-hydroxybenzoate (4HB) for the ubiquinone pathway. The chain is Probable chorismate pyruvate-lyase from Psychrobacter arcticus (strain DSM 17307 / VKM B-2377 / 273-4).